The chain runs to 412 residues: Protein png-1 (412 aa).

4 residues coordinate Zn(2+): cysteine 150, cysteine 153, cysteine 182, and cysteine 185. Residues alanine 363 to proline 412 are disordered.

The protein belongs to the transglutaminase-like superfamily. PNGase family.

The polypeptide is Protein png-1 (un-7) (Neurospora crassa (strain ATCC 24698 / 74-OR23-1A / CBS 708.71 / DSM 1257 / FGSC 987)).